The following is a 342-amino-acid chain: Protein-glutamate methylesterase/protein-glutamine glutaminase 2 (342 aa).

The Response regulatory domain occupies 2–119; sequence NIGIVNDLPL…GGSADPSQPL (118 aa). Residue D53 is modified to 4-aspartylphosphate. The CheB-type methylesterase domain occupies 144–337; it reads PAPQGALPPL…DQLISLVQRN (194 aa). Catalysis depends on residues S159, H186, and D279.

Belongs to the CheB family. In terms of processing, phosphorylated by CheA. Phosphorylation of the N-terminal regulatory domain activates the methylesterase activity.

The protein resides in the cytoplasm. It catalyses the reaction [protein]-L-glutamate 5-O-methyl ester + H2O = L-glutamyl-[protein] + methanol + H(+). The enzyme catalyses L-glutaminyl-[protein] + H2O = L-glutamyl-[protein] + NH4(+). Functionally, involved in chemotaxis. Part of a chemotaxis signal transduction system that modulates chemotaxis in response to various stimuli. Catalyzes the demethylation of specific methylglutamate residues introduced into the chemoreceptors (methyl-accepting chemotaxis proteins or MCP) by CheR. Also mediates the irreversible deamidation of specific glutamine residues to glutamic acid. The sequence is that of Protein-glutamate methylesterase/protein-glutamine glutaminase 2 from Burkholderia mallei (strain ATCC 23344).